We begin with the raw amino-acid sequence, 260 residues long: Ribosome biogenesis protein NSA2 (260 aa).

Disordered stretches follow at residues methionine 1 to alanine 37 and glutamine 60 to glycine 79. The Nuclear localization signal motif lies at arginine 11–leucine 18. 2 stretches are compositionally biased toward basic and acidic residues: residues arginine 17–serine 36 and lysine 66–glycine 79.

This sequence belongs to the eukaryotic ribosomal protein eS8 family. Ribosome biogenesis protein NSA2 subfamily. Component of the pre-66S ribosomal particle. Interacts with NOP7 and RRP1. Interacts with RSA4 (via WD repeats).

The protein resides in the nucleus. The protein localises to the nucleolus. Functionally, involved in the biogenesis of the 60S ribosomal subunit. May play a part in the quality control of pre-60S particles. This is Ribosome biogenesis protein NSA2 (NSA2) from Cryptococcus neoformans var. neoformans serotype D (strain JEC21 / ATCC MYA-565) (Filobasidiella neoformans).